The chain runs to 388 residues: Ribosomal RNA large subunit methyltransferase F (388 aa).

Polar residues predominate over residues 1–22; that stretch reads MKTNNHNAKQAQTKTAKSNPSK. Residues 1–51 form a disordered region; it reads MKTNNHNAKQAQTKTAKSNPSKEVTKIKPKRVKNKPTAKAAKSTGLKTNAA. The span at 27 to 36 shows a compositional bias: basic residues; it reads IKPKRVKNKP.

The protein belongs to the methyltransferase superfamily. METTL16/RlmF family.

The protein resides in the cytoplasm. The catalysed reaction is adenosine(1618) in 23S rRNA + S-adenosyl-L-methionine = N(6)-methyladenosine(1618) in 23S rRNA + S-adenosyl-L-homocysteine + H(+). Functionally, specifically methylates the adenine in position 1618 of 23S rRNA. The polypeptide is Ribosomal RNA large subunit methyltransferase F (Vibrio campbellii (strain ATCC BAA-1116)).